We begin with the raw amino-acid sequence, 259 residues long: MALFSVPPPVTVILLDIEGTTTPITFVKDVLFPYVKENIKKYLLEHWQEKECQEDVTQLQKQAEKDSHLDGFVPIPSGVSDNTTEHMIQAVVDNVYWQMSFDRKTTALKQLQGHMWRSAYISGQLKGEVYEDVVPSIRQWRELGIKLYIYSSGSIDAQKLLFGYSIEGDLLKLLDGHFDTNIGHKVESKSYRNIADNIGCLPENILFLTDVVKEALAAEKAGLHVAVVVRPGNAALTDEDKSNCCCITSFHQIHFPSQK.

Residues Asp16 and Glu18 each contribute to the Mg(2+) site. Substrate contacts are provided by residues 151–152 and Lys185; that span reads SS. Asp210 lines the Mg(2+) pocket.

The protein belongs to the HAD-like hydrolase superfamily. MasA/MtnC family. As to quaternary structure, monomer. Mg(2+) is required as a cofactor.

Its subcellular location is the cytoplasm. The protein localises to the nucleus. The enzyme catalyses 5-methylsulfanyl-2,3-dioxopentyl phosphate + H2O = 1,2-dihydroxy-5-(methylsulfanyl)pent-1-en-3-one + phosphate. The protein operates within amino-acid biosynthesis; L-methionine biosynthesis via salvage pathway; L-methionine from S-methyl-5-thio-alpha-D-ribose 1-phosphate: step 3/6. It functions in the pathway amino-acid biosynthesis; L-methionine biosynthesis via salvage pathway; L-methionine from S-methyl-5-thio-alpha-D-ribose 1-phosphate: step 4/6. Functionally, bifunctional enzyme that catalyzes the enolization of 2,3-diketo-5-methylthiopentyl-1-phosphate (DK-MTP-1-P) into the intermediate 2-hydroxy-3-keto-5-methylthiopentenyl-1-phosphate (HK-MTPenyl-1-P), which is then dephosphorylated to form the acireductone 1,2-dihydroxy-3-keto-5-methylthiopentene (DHK-MTPene). In Xenopus tropicalis (Western clawed frog), this protein is Enolase-phosphatase E1 (enoph1).